The chain runs to 417 residues: Gamma-glutamyl phosphate reductase (417 aa).

Belongs to the gamma-glutamyl phosphate reductase family.

It is found in the cytoplasm. The enzyme catalyses L-glutamate 5-semialdehyde + phosphate + NADP(+) = L-glutamyl 5-phosphate + NADPH + H(+). It participates in amino-acid biosynthesis; L-proline biosynthesis; L-glutamate 5-semialdehyde from L-glutamate: step 2/2. Its function is as follows. Catalyzes the NADPH-dependent reduction of L-glutamate 5-phosphate into L-glutamate 5-semialdehyde and phosphate. The product spontaneously undergoes cyclization to form 1-pyrroline-5-carboxylate. The chain is Gamma-glutamyl phosphate reductase from Heliobacterium modesticaldum (strain ATCC 51547 / Ice1).